The following is a 182-amino-acid chain: Probable pyruvoyl-dependent arginine decarboxylase (182 aa).

Serine 43 carries the pyruvic acid (Ser) modification.

This sequence belongs to the PdaD family. It depends on pyruvate as a cofactor.

It carries out the reaction L-arginine + H(+) = agmatine + CO2. This chain is Probable pyruvoyl-dependent arginine decarboxylase, found in Chloroherpeton thalassium (strain ATCC 35110 / GB-78).